The primary structure comprises 265 residues: Adenosylcobinamide-GDP ribazoletransferase (265 aa).

A run of 5 helical transmembrane segments spans residues 59 to 79, 113 to 133, 141 to 161, 183 to 203, and 206 to 226; these read LSWI…SVLI, IGTF…LLLV, WIFL…ALLL, LPPF…VYFL, and FQNQ…FVFY.

This sequence belongs to the CobS family. It depends on Mg(2+) as a cofactor.

It localises to the cell inner membrane. The enzyme catalyses alpha-ribazole + adenosylcob(III)inamide-GDP = adenosylcob(III)alamin + GMP + H(+). The catalysed reaction is alpha-ribazole 5'-phosphate + adenosylcob(III)inamide-GDP = adenosylcob(III)alamin 5'-phosphate + GMP + H(+). Its pathway is cofactor biosynthesis; adenosylcobalamin biosynthesis; adenosylcobalamin from cob(II)yrinate a,c-diamide: step 7/7. Joins adenosylcobinamide-GDP and alpha-ribazole to generate adenosylcobalamin (Ado-cobalamin). Also synthesizes adenosylcobalamin 5'-phosphate from adenosylcobinamide-GDP and alpha-ribazole 5'-phosphate. This Leptospira interrogans serogroup Icterohaemorrhagiae serovar copenhageni (strain Fiocruz L1-130) protein is Adenosylcobinamide-GDP ribazoletransferase.